A 692-amino-acid chain; its full sequence is Polyribonucleotide nucleotidyltransferase (692 aa).

Mg(2+) is bound by residues Asp-484 and Asp-490. In terms of domain architecture, KH spans 551–610 (PRIITIQINPDRIRDVIGPGGKVIRALTEETGATIDIQDNGTVTIASVDGEAGAAAKRRI). In terms of domain architecture, S1 motif spans 620 to 688 (DTIYDGKVAK…RQGKIKLSMK (69 aa)).

It belongs to the polyribonucleotide nucleotidyltransferase family. In terms of assembly, component of the RNA degradosome, which is a multiprotein complex involved in RNA processing and mRNA degradation. Requires Mg(2+) as cofactor.

The protein resides in the cytoplasm. It carries out the reaction RNA(n+1) + phosphate = RNA(n) + a ribonucleoside 5'-diphosphate. Its function is as follows. Involved in mRNA degradation. Catalyzes the phosphorolysis of single-stranded polyribonucleotides processively in the 3'- to 5'-direction. This is Polyribonucleotide nucleotidyltransferase from Acidithiobacillus ferrooxidans (strain ATCC 53993 / BNL-5-31) (Leptospirillum ferrooxidans (ATCC 53993)).